Consider the following 784-residue polypeptide: ATP-dependent 6-phosphofructokinase, platelet type (784 aa).

Residue Met-1 is modified to N-acetylmethionine. Residues 1–399 are N-terminal catalytic PFK domain 1; sequence MDADDSRAPK…NLNTYKRLAI (399 aa). Residues Ser-6, Ser-12, and Ser-21 each carry the phosphoserine modification. Residues Gly-34, 97 to 98, and 127 to 130 contribute to the ATP site; these read RC and GDGS. Asp-128 is a binding site for Mg(2+). The residue at position 142 (Ser-142) is a Phosphoserine. Substrate is bound by residues 173 to 175, Arg-210, 217 to 219, Glu-273, Arg-301, and 307 to 310; these read SID, MGR, and HVQR. Asp-175 serves as the catalytic Proton acceptor. Ser-386 bears the Phosphoserine mark. An N6-acetyllysine modification is found at Lys-395. Residues 400 to 411 are interdomain linker; that stretch reads KLPDDQIPKTNC. The segment at 412 to 784 is C-terminal regulatory PFK domain 2; the sequence is NVAVINVGAP…QLEHVQPWSV (373 aa). Arg-481 provides a ligand contact to beta-D-fructose 2,6-bisphosphate. Lys-486 is subject to N6-acetyllysine. Residues 538–542, Arg-576, 583–585, and Glu-639 contribute to the beta-D-fructose 2,6-bisphosphate site; these read TVSNN and MGG. Residue Ser-540 is glycosylated (O-linked (GlcNAc) serine). A Phosphotyrosine modification is found at Tyr-651. Beta-D-fructose 2,6-bisphosphate-binding positions include Arg-665 and 671–674; that span reads HMQQ. Lys-688 bears the N6-acetyllysine mark. Arg-744 is a binding site for beta-D-fructose 2,6-bisphosphate. At Ser-783 the chain carries Phosphoserine.

The protein belongs to the phosphofructokinase type A (PFKA) family. ATP-dependent PFK group I subfamily. Eukaryotic two domain clade 'E' sub-subfamily. As to quaternary structure, homo- and heterotetramers. Phosphofructokinase (PFK) enzyme functions as a tetramer composed of different combinations of 3 types of subunits, called PFKM (where M stands for Muscle), PFKL (Liver) and PFKP (Platelet). The composition of the PFK tetramer differs according to the tissue type it is present in. In muscles, it is composed of 4 PFKM subunits (also called M4). In the liver, the predominant form is a tetramer of PFKL subunits (L4). In erythrocytes, both PFKM and PFKL subunits randomly tetramerize to form M4, L4 and other combinations (ML3, M2L2, M3L). In platelets, brain and fibroblasts, PFK contains a higher proportion of PFKP subunits. The kinetic and regulatory properties of the tetrameric enzyme are dependent on the subunit composition, hence can vary across tissues. Interacts with ATG4B; promoting phosphorylation of ATG4B. Requires Mg(2+) as cofactor. Post-translationally, phosphorylation at Ser-386 promotes interaction with ATG4B. GlcNAcylation decreases enzyme activity.

It localises to the cytoplasm. It catalyses the reaction beta-D-fructose 6-phosphate + ATP = beta-D-fructose 1,6-bisphosphate + ADP + H(+). The protein operates within carbohydrate degradation; glycolysis; D-glyceraldehyde 3-phosphate and glycerone phosphate from D-glucose: step 3/4. Its activity is regulated as follows. Allosterically activated by ADP, AMP, or fructose 2,6-bisphosphate, and allosterically inhibited by ATP or citrate. In terms of biological role, catalyzes the phosphorylation of D-fructose 6-phosphate to fructose 1,6-bisphosphate by ATP, the first committing step of glycolysis. The polypeptide is ATP-dependent 6-phosphofructokinase, platelet type (PFKP) (Homo sapiens (Human)).